The primary structure comprises 295 residues: Iron-sulfur cluster carrier protein (295 aa).

Residue 38–45 (GKGGVGKS) coordinates ATP.

It belongs to the Mrp/NBP35 ATP-binding proteins family. In terms of assembly, homodimer.

In terms of biological role, binds and transfers iron-sulfur (Fe-S) clusters to target apoproteins. Can hydrolyze ATP. This Pyrococcus horikoshii (strain ATCC 700860 / DSM 12428 / JCM 9974 / NBRC 100139 / OT-3) protein is Iron-sulfur cluster carrier protein.